The primary structure comprises 334 residues: uncharacterized protein (334 aa).

2 helical membrane-spanning segments follow: residues 19 to 39 and 55 to 75; these read AFLR…SFGI and LIVL…AALF. The segment at 308–334 is disordered; the sequence is KPESKSSSQKSVETEIEKEVKDKLAKN. Residues 319 to 334 are compositionally biased toward basic and acidic residues; that stretch reads VETEIEKEVKDKLAKN.

The protein resides in the cell membrane. This is an uncharacterized protein from Mycoplasma genitalium (strain ATCC 33530 / DSM 19775 / NCTC 10195 / G37) (Mycoplasmoides genitalium).